A 338-amino-acid polypeptide reads, in one-letter code: Cell division protein ZipA (338 aa).

Residues 1 to 2 (MS) lie on the Periplasmic side of the membrane. The chain crosses the membrane as a helical span at residues 3-23 (LREWLIAIGTLVIIGIVIDGV). The Cytoplasmic segment spans residues 24–338 (RRMRRARKES…FERKQRSQRA (315 aa)). Residues 33 to 192 (SMAISSGMGA…RKNQPLAGAN (160 aa)) are disordered. 2 stretches are compositionally biased toward basic and acidic residues: residues 70–81 (TLEDRGYLKRDM) and 138–162 (EVDR…RAEE).

It belongs to the ZipA family. Interacts with FtsZ via their C-terminal domains.

It localises to the cell inner membrane. Its function is as follows. Essential cell division protein that stabilizes the FtsZ protofilaments by cross-linking them and that serves as a cytoplasmic membrane anchor for the Z ring. Also required for the recruitment to the septal ring of downstream cell division proteins. This Marinobacter nauticus (strain ATCC 700491 / DSM 11845 / VT8) (Marinobacter aquaeolei) protein is Cell division protein ZipA.